We begin with the raw amino-acid sequence, 722 residues long: Dipeptidyl aminopeptidase BII (722 aa).

The N-terminal stretch at methionine 1 to alanine 24 is a signal peptide. 2 cysteine pairs are disulfide-bonded: cysteine 70–cysteine 87 and cysteine 166–cysteine 174. Catalysis depends on histidine 86, which acts as the Charge relay system. Asparagine 215–tryptophan 216 contacts substrate. The active-site Charge relay system is the aspartate 224. Residues asparagine 330, glycine 655 to serine 657, and phenylalanine 673 to aspartate 674 contribute to the substrate site. The active-site Charge relay system is the serine 657.

Belongs to the peptidase S46 family. Homodimer.

With respect to regulation, completely inhibited by the serine protease inhibitor diisopropyl fluorophosphate (DFP) and potently inhibited by 0.5 mM ZnCl(2), 10 mM o-phenanthlorine, phenylmethanesulfonyl fluoride (PMSF) and N-tosyl-L-phenyl-alanyl chloromethyl ketone (TPCK), but not by N-tosyl-L-lysyl chloromethyl ketone (TLCK). Activity is not affected significantly by protease inhibitors, such as chymostatin, leupeptin, N-ethylmaleimide (NEM), iodoacetate (IAA), L-trans-epoxysuccinyl-leucylamido(4-guanido)butane (E64) and pepstatin A or by CoCl(2), CaCl(2) and EDTA. In terms of biological role, exopeptidase that catalyzes the removal of dipeptide units (NH2-P2-P1-) from the free amino termini of oligopeptides and small proteins. Peptide digestion is sequential and substrate recognition is non-specific, with the exception that Pro is not suitable as a P1 residue. Removes many residues of bioactive oligopeptides such as angiotensin I and neuromedin N and also cleaves oxidized insulin B chain. Able to hydrolyze an X-Pro bond, an imido bond. No endopeptidase activity. May play a physiological role in feeding. This Pseudoxanthomonas mexicana protein is Dipeptidyl aminopeptidase BII.